Reading from the N-terminus, the 386-residue chain is uncharacterized protein (386 aa).

2 consecutive transmembrane segments (helical) span residues 54 to 74 (AVLQ…AIVA) and 347 to 367 (LLGG…PIAG).

The protein to M.tuberculosis Rv0628c.

It is found in the cell membrane. This is an uncharacterized protein from Mycobacterium tuberculosis (strain CDC 1551 / Oshkosh).